A 523-amino-acid chain; its full sequence is Metalloendopeptidase OMA1, mitochondrial (523 aa).

Residues 1 to 45 constitute a mitochondrion transit peptide; the sequence is MSFIYGLQSAARNCFFFRFNLLTNWRKCNTQAVTSRDFHQVKINH. Positions 46–143 are excised as a propeptide; the sequence is IVNKSLGLGV…RSFHTSPRCQ (98 aa). Residues 144–195 are Mitochondrial matrix-facing; it reads AAPAPLLLMILKPAQKLLAIIVGRGIRKWWQALPPNKKELFKESLRKNKWKL. The tract at residues 148–167 is cardiolipin-binding; the sequence is PLLLMILKPAQKLLAIIVGR. Residues 165–195 form a stress-sensor region region; it reads VGRGIRKWWQALPPNKKELFKESLRKNKWKL. A helical transmembrane segment spans residues 196 to 216; it reads FLGLSSFGLLFVVFYFTHLEV. Histidine 327 lines the Zn(2+) pocket. Residue glutamate 328 is part of the active site. Histidine 331 and glutamate 392 together coordinate Zn(2+). Cysteine 407 and cysteine 465 form a disulfide bridge.

The protein belongs to the peptidase M48 family. In terms of assembly, homooligomer. Zn(2+) is required as a cofactor. In terms of processing, autocatalytically cleaved in response to mitochondrial depolarization both at the N-terminus and C-terminus to generate the short active form (S-OMA1). Autocatalytic processing at the C-terminus takes place at residues 447-456. The S-OMA1 form is unstable. OMA1 pre-processing by AFG3L2 may participate in maturation before OMA1 autocatalytic cleavage. Degraded by YMEL1 in response to membrane depolarization. Protein turnover is regulated by prohibitin (PHB and PHB2), which promotes degradation of OMA1 in a cardiolipin-binding manner. May form a redox-dependent disulfide bond. Exists in a semi-oxidized state and is activated by prolonged hypoxia.

Its subcellular location is the mitochondrion inner membrane. With respect to regulation, protease activity is activated upon autocatalytic cleavage in response to mitochondrial depolarization. Metalloprotease that is part of the quality control system in the inner membrane of mitochondria. Activated in response to various mitochondrial stress, leading to the proteolytic cleavage of target proteins, such as OPA1, UQCC3 and DELE1. Involved in the fusion of the mitochondrial inner membranes by mediating cleavage of OPA1 at S1 position, generating the soluble OPA1 (S-OPA1), which cooperates with the membrane form (L-OPA1) to coordinate the fusion of mitochondrial inner membranes. Following stress conditions that induce loss of mitochondrial membrane potential, mediates cleavage of OPA1, leading to excess production of soluble OPA1 (S-OPA1) and negative regulation of mitochondrial fusion. Involved in mitochondrial safeguard in response to transient mitochondrial membrane depolarization (flickering) by catalyzing cleavage of OPA1, leading to excess production of S-OPA1, preventing mitochondrial hyperfusion. Also acts as a regulator of apoptosis: upon BAK and BAX aggregation, mediates cleavage of OPA1, leading to the remodeling of mitochondrial cristae and allowing the release of cytochrome c from mitochondrial cristae. In depolarized mitochondria, may also act as a backup protease for PINK1 by mediating PINK1 cleavage and promoting its subsequent degradation by the proteasome. May also cleave UQCC3 in response to mitochondrial depolarization. Also acts as an activator of the integrated stress response (ISR): in response to mitochondrial stress, mediates cleavage of DELE1 to generate the processed form of DELE1 (S-DELE1), which translocates to the cytosol and activates EIF2AK1/HRI to trigger the ISR. Its role in mitochondrial quality control is essential for regulating lipid metabolism as well as to maintain body temperature and energy expenditure under cold-stress conditions. Binds cardiolipin, possibly regulating its protein turnover. Required for the stability of the respiratory supercomplexes. This is Metalloendopeptidase OMA1, mitochondrial from Bos taurus (Bovine).